The chain runs to 235 residues: MFDPFLDQLHADITARGGTPAEVPDGLAECHSAKGASVIRSWLWQVPGFRRWRVTRLDAGESLQVLNSVAYPDYGFDHPLMGVDLLWFGARQKLVAVLDFQPLVQNEAYFDRYFDGLKALNRQFPDLNGEETMRSFDPNQYFSSWLLFCRGGAEQAQTSLPPAFSAFLKAYWALHDAAKNNPATIAADEVKRLQENYDVYSAERDPAHGLFTSHFGKNWSDQFLHEFLFPASGQS.

Belongs to the HY2 family.

The catalysed reaction is 15,16-dihydrobiliverdin + oxidized 2[4Fe-4S]-[ferredoxin] = biliverdin IXalpha + reduced 2[4Fe-4S]-[ferredoxin] + 2 H(+). Functionally, catalyzes the two-electron reduction of biliverdin IX-alpha at the C15 methine bridge. The sequence is that of 15,16-dihydrobiliverdin:ferredoxin oxidoreductase from Synechococcus sp. (strain CC9902).